A 331-amino-acid chain; its full sequence is Ketol-acid reductoisomerase (NADP(+)) (331 aa).

One can recognise a KARI N-terminal Rossmann domain in the interval 2–182 (AKLFYDSDAD…GGTRAGILET (181 aa)). Residues 25–28 (YGSQ), serine 51, serine 53, and 83–86 (DEFQ) each bind NADP(+). The active site involves histidine 108. NADP(+) is bound at residue glycine 134. The KARI C-terminal knotted domain occupies 183-328 (NFKEETETDL…KTLRSMFSWL (146 aa)). Residues aspartate 191, glutamate 195, glutamate 227, and glutamate 231 each contribute to the Mg(2+) site. Serine 252 serves as a coordination point for substrate.

This sequence belongs to the ketol-acid reductoisomerase family. Requires Mg(2+) as cofactor.

It catalyses the reaction (2R)-2,3-dihydroxy-3-methylbutanoate + NADP(+) = (2S)-2-acetolactate + NADPH + H(+). It carries out the reaction (2R,3R)-2,3-dihydroxy-3-methylpentanoate + NADP(+) = (S)-2-ethyl-2-hydroxy-3-oxobutanoate + NADPH + H(+). It functions in the pathway amino-acid biosynthesis; L-isoleucine biosynthesis; L-isoleucine from 2-oxobutanoate: step 2/4. Its pathway is amino-acid biosynthesis; L-valine biosynthesis; L-valine from pyruvate: step 2/4. In terms of biological role, involved in the biosynthesis of branched-chain amino acids (BCAA). Catalyzes an alkyl-migration followed by a ketol-acid reduction of (S)-2-acetolactate (S2AL) to yield (R)-2,3-dihydroxy-isovalerate. In the isomerase reaction, S2AL is rearranged via a Mg-dependent methyl migration to produce 3-hydroxy-3-methyl-2-ketobutyrate (HMKB). In the reductase reaction, this 2-ketoacid undergoes a metal-dependent reduction by NADPH to yield (R)-2,3-dihydroxy-isovalerate. The sequence is that of Ketol-acid reductoisomerase (NADP(+)) from Prochlorococcus marinus (strain NATL1A).